Consider the following 821-residue polypeptide: Lon protease (821 aa).

Residues 18-216 (LPLMSLREVV…KVYELLQGEI (199 aa)) enclose the Lon N-terminal domain. ATP is bound at residue 368-375 (GPPGVGKT). In terms of domain architecture, Lon proteolytic spans 606–787 (TSQVGVCTGL…DEVLPQALMA (182 aa)). Residues Ser-693 and Lys-736 contribute to the active site.

The protein belongs to the peptidase S16 family. Homohexamer. Organized in a ring with a central cavity.

It localises to the cytoplasm. The catalysed reaction is Hydrolysis of proteins in presence of ATP.. Its function is as follows. ATP-dependent serine protease that mediates the selective degradation of mutant and abnormal proteins as well as certain short-lived regulatory proteins. Required for cellular homeostasis and for survival from DNA damage and developmental changes induced by stress. Degrades polypeptides processively to yield small peptide fragments that are 5 to 10 amino acids long. Binds to DNA in a double-stranded, site-specific manner. This Nitratidesulfovibrio vulgaris (strain ATCC 29579 / DSM 644 / CCUG 34227 / NCIMB 8303 / VKM B-1760 / Hildenborough) (Desulfovibrio vulgaris) protein is Lon protease.